The primary structure comprises 118 residues: MRPFQLLSALAIFINLEAVEAAAYWDCDGTEIPERNVRAAVVLAFNYRKESFHGYPATFIIGSTFSGVGEVRQFPVEDSDANWQGGAVKYYILTNKRGSYLEVFSSVGSGNKCTFVEG.

A signal peptide spans 1 to 21 (MRPFQLLSALAIFINLEAVEA). Cysteines 27 and 113 form a disulfide.

As to quaternary structure, interacts in planta with the pathogenesis-related protein PR10.

It localises to the secreted. The protein localises to the host cell. Secreted effector that increases susceptibility to infection in both monocotyledonous and dicotyledonous plants. Non-catalytic homolog of fungal RNases that binds host RNA and inhibits the degradation of host ribosomal RNA induced by ribosome-inactivating proteins (RIPs), preventing host cell death, an inviable interaction and demise of the fungus. This chain is Secreted effector CSEP0064, found in Blumeria graminis f. sp. hordei (strain DH14) (Barley powdery mildew).